A 132-amino-acid polypeptide reads, in one-letter code: DNA-entry nuclease inhibitor (132 aa).

This protein is a subunit of a 75 kDa protein complex, which governs binding and entry of donor DNA. The complex is a tetramer of two subunits of the DNA-entry nuclease and two subunits of a competence-specific protein. Only the complex is able to bind ds- and ss-DNA.

It is found in the cell membrane. In terms of biological role, plays a role in the competence of cells to be transformed. It inhibits the activity of the DNA-entry nuclease. The protein is DNA-entry nuclease inhibitor (nin) of Bacillus subtilis (strain 168).